The following is a 655-amino-acid chain: MLSVPHLDRDFDYLVPAEHSDDAQPGVRVRVRFHGRLVDGFVLERRSDSDHHGKLGWLDRVVSPEPVLTTEIRRLVDAVAARYAGTRQDVLRLAVPARHARVEREITTAPGRPVVAPVDPSGWAAYGRGRQFLAALADSRAARAVWQALPGELWADRFAEAAAQTVRAGRTVLAIVPDQRDLDTLWQAATALVDEHSVVALSAGLGPEARYRRWLAALRGSARLVIGTRSAVFAPLSELGLVMVWADADDSLAEPRAPYPHAREVAMLRAHQARCAALIGGYARTAEAHALVRSGWAHDVVAPRPEVRARSPRVVALDDSGYDDARDPAARTARLPSIALRAARSALQSGAPVLVQVPRRGYIPSLACGRCRAIARCRSCTGPLSLQGAGSPGAVCRWCGRVDPTLRCVRCGSDVVRAVVVGARRTAEELGRAFPGTAVITSAGDTLVPQLDAGPALVVATPGAEPRAPGGYGAALLLDSWALLGRQDLRAAEDALWRWMTAAALVRPRGAGGVVTVVAESSIPTVQSLIRWDPVGHAEAELAARTEVGLPPSVHIAALDGPAGTVTALLEAARLPDPDRLQADLLGPVDLPPGVRRPAGIPADAPVIRMLLRVCREQGLELAASLRRGIGVLSARQTRQTRSLVRVQIDPLHIG.

Zn(2+)-binding residues include Cys-368, Cys-371, Cys-377, Cys-380, Cys-396, Cys-399, Cys-408, and Cys-411.

It belongs to the helicase family. PriA subfamily. Component of the replication restart primosome. The cofactor is Zn(2+).

Initiates the restart of stalled replication forks, which reloads the replicative helicase on sites other than the origin of replication. Recognizes and binds to abandoned replication forks and remodels them to uncover a helicase loading site. Promotes assembly of the primosome at these replication forks. This is Probable replication restart protein PriA from Mycobacterium bovis (strain ATCC BAA-935 / AF2122/97).